We begin with the raw amino-acid sequence, 262 residues long: Serine/arginine-rich splicing factor 10 (262 aa).

Residues 10-88 form the RRM domain; it reads TSLFVRNVAD…RQIEIQFAQG (79 aa). Phosphoserine occurs at positions 23, 106, and 108. Positions 116–126 are enriched in basic and acidic residues; sequence YRRSRSRSYER. The segment at 116–262 is disordered; that stretch reads YRRSRSRSYE…SWTSPKSSGH (147 aa). Phosphoserine is present on residues Ser129, Ser131, and Ser133. Low complexity predominate over residues 134 to 150; that stretch reads FDYNYRRSYSPRNSRPT. Residues Ser158, Ser160, and Arg168 each carry the phosphoserine modification. 2 stretches are compositionally biased toward basic residues: residues 165–186 and 194–207; these read FKHRNRSFSRSKSNSRSRSKSQ and KSRSRSASHTKTRG. Positions 209 to 234 are enriched in basic and acidic residues; that stretch reads SKTDSKTHYKSGSRYEKESRKKEPPR. The span at 252-262 shows a compositional bias: low complexity; that stretch reads RSWTSPKSSGH.

Belongs to the splicing factor SR family. As to quaternary structure, the phosphorylated but not the dephosphorylated form interacts with TRA2B/SFRS10. The dephosphorylated form interacts with SNRNP70. Isoform 1 interacts with FUS C-terminus. Isoform 3 interacts with FUS C-terminus. Interacts with YTHDC1, leading to inhibit RNA-binding activity of SRSF10. In terms of processing, phosphorylated. Fully dephosphorylated in mitosis and partially dephosphorylated on heat shock. In terms of tissue distribution, widely expressed.

Its subcellular location is the nucleus speckle. The protein localises to the cytoplasm. Splicing factor that in its dephosphorylated form acts as a general repressor of pre-mRNA splicing. Seems to interfere with the U1 snRNP 5'-splice recognition of SNRNP70. Required for splicing repression in M-phase cells and after heat shock. Also acts as a splicing factor that specifically promotes exon skipping during alternative splicing. Interaction with YTHDC1, a RNA-binding protein that recognizes and binds N6-methyladenosine (m6A)-containing RNAs, prevents SRSF10 from binding to its mRNA-binding sites close to m6A-containing regions, leading to inhibit exon skipping during alternative splicing. May be involved in regulation of alternative splicing in neurons, with isoform 1 acting as a positive and isoform 3 as a negative regulator. This chain is Serine/arginine-rich splicing factor 10 (SRSF10), found in Homo sapiens (Human).